A 142-amino-acid polypeptide reads, in one-letter code: Hemoglobin subunit alpha (142 aa).

The 141-residue stretch at 2 to 142 folds into the Globin domain; the sequence is VLSSQNKKAI…VAYELSSCYR (141 aa). An O2-binding site is contributed by H60. Residue H89 participates in heme b binding.

The protein belongs to the globin family. Heterotetramer of two alpha chains and two beta chains. Red blood cells.

Involved in oxygen transport from gills to the various peripheral tissues. In Hemitrygon akajei (Red stingray), this protein is Hemoglobin subunit alpha (hba).